Consider the following 36-residue polypeptide: Photosystem II reaction center protein M (36 aa).

Residues 5–25 traverse the membrane as a helical segment; that stretch reads ILGVIATALFIIIPTSFLLIL.

The protein belongs to the PsbM family. In terms of assembly, PSII is composed of 1 copy each of membrane proteins PsbA, PsbB, PsbC, PsbD, PsbE, PsbF, PsbH, PsbI, PsbJ, PsbK, PsbL, PsbM, PsbT, PsbX, PsbY, PsbZ, Psb30/Ycf12, at least 3 peripheral proteins of the oxygen-evolving complex and a large number of cofactors. It forms dimeric complexes.

It is found in the plastid. The protein localises to the chloroplast thylakoid membrane. In terms of biological role, one of the components of the core complex of photosystem II (PSII). PSII is a light-driven water:plastoquinone oxidoreductase that uses light energy to abstract electrons from H(2)O, generating O(2) and a proton gradient subsequently used for ATP formation. It consists of a core antenna complex that captures photons, and an electron transfer chain that converts photonic excitation into a charge separation. This subunit is found at the monomer-monomer interface. The chain is Photosystem II reaction center protein M from Chlorella vulgaris (Green alga).